Here is a 232-residue protein sequence, read N- to C-terminus: GTP cyclohydrolase III (232 aa).

It belongs to the archaeal-type GTP cyclohydrolase family.

It carries out the reaction GTP + 3 H2O = 2-amino-5-formylamino-6-(5-phospho-D-ribosylamino)pyrimidin-4(3H)-one + 2 phosphate + 2 H(+). Catalyzes the formation of 2-amino-5-formylamino-6-ribofuranosylamino-4(3H)-pyrimidinone ribonucleotide monophosphate and inorganic phosphate from GTP. Also has an independent pyrophosphate phosphohydrolase activity. The chain is GTP cyclohydrolase III from Saccharolobus islandicus (strain Y.G.57.14 / Yellowstone #1) (Sulfolobus islandicus).